The sequence spans 1220 residues: Osmosensing histidine protein kinase SLN1 (1220 aa).

The Cytoplasmic segment spans residues 1-22 (MRFGLPSKLELTPPFRIGIRTQ). A helical membrane pass occupies residues 23–46 (LTALVSIVALGSLIILAVTTGVYF). The Extracellular portion of the chain corresponds to 47–333 (TSNYKNLRSD…FLSPATKLAK (287 aa)). N-linked (GlcNAc...) asparagine glycosylation is found at Asn100, Asn138, Asn142, Asn181, Asn224, and Asn272. A helical membrane pass occupies residues 334–354 (IITGTVIAIGVFVILLTLPLA). At 355–1220 (HWAVQPIVRL…AAYQGKKNNK (866 aa)) the chain is on the cytoplasmic side. Disordered stretches follow at residues 414–433 (GSTTSVSGHGGSGHGSGAAF) and 444–500 (NLGN…HILT). Residues 451-468 (SPPEEENKIPNNHTDAKI) are compositionally biased toward basic and acidic residues. Phosphoserine is present on Ser502. In terms of domain architecture, Histidine kinase spans 573 to 928 (NISHELRTPL…KFTFTLPLNQ (356 aa)). Residue His576 is modified to Phosphohistidine; by autocatalysis. Phosphoserine is present on residues Ser758 and Ser833. 2 disordered regions span residues 960-1016 (AKSI…DNGG) and 1040-1081 (NSLS…VKDD). A compositionally biased stretch (polar residues) spans 965-984 (SRQSTSSVATPATNRSSLTN). Positions 988–1000 (PEVRSKGKHETKD) are enriched in basic and acidic residues. 2 positions are modified to phosphoserine: Ser1041 and Ser1044. The span at 1063 to 1075 (LQSTGTATSSRNI) shows a compositional bias: polar residues. The Response regulatory domain maps to 1089 to 1210 (KILVVEDNHV…KLKTILTEFC (122 aa)). Glu1094, Asp1095, Asp1144, and Lys1195 together coordinate Mg(2+). Asp1144 carries the post-translational modification 4-aspartylphosphate.

As to quaternary structure, interacts with DJP1, MOG1 and YPD1. In terms of processing, the phosphorelay mechanism involves the sequential transfer of a phosphate group from His-576 (H1) in the histidine kinase domain (transmitter domain) to Asp-1144 (D1) of the response regulatory domain (receiver domain). This transfer probably occurs between two SLN1 molecules, rather than intramolecularly. The phosphate group is further transferred to 'His-64' (H2) of YPD1 and finally to 'Asp-554' (D2) of SSK1 or 'Asp-427' (D2) of SKN7.

The protein localises to the cell membrane. It carries out the reaction ATP + protein L-histidine = ADP + protein N-phospho-L-histidine.. Histidine kinase that acts as an osmosensor at the plasma membrane. Part of the bifurcated SLN1-YPD1-SKN7/SSK1 two-component regulatory system, which controls activity of the HOG1 pathway and gene expression in response to changes in the osmolarity of the extracellular environment. Under normal osmotic conditions, the histidine kinase autophosphorylates His-576. This phosphate is subsequently transferred to Asp-1144, from where it is relayed to 'His-64' of the phosphorelay intermediate protein YPD1. Under high osmolarity conditions, the histidine kinase is no longer active. In Saccharomyces cerevisiae (strain ATCC 204508 / S288c) (Baker's yeast), this protein is Osmosensing histidine protein kinase SLN1 (SLN1).